We begin with the raw amino-acid sequence, 68 residues long: Sec-independent protein translocase protein TatA (68 aa).

A helical transmembrane segment spans residues 1 to 21 (MGSFSIWHWLIVLAVVLLLFG). Residues 42 to 68 (GMGDDEVASADKSVDGKTVDHKSDEVR) form a disordered region. Residues 53 to 68 (KSVDGKTVDHKSDEVR) show a composition bias toward basic and acidic residues.

The protein belongs to the TatA/E family. In terms of assembly, the Tat system comprises two distinct complexes: a TatABC complex, containing multiple copies of TatA, TatB and TatC subunits, and a separate TatA complex, containing only TatA subunits. Substrates initially bind to the TatABC complex, which probably triggers association of the separate TatA complex to form the active translocon.

It localises to the cell inner membrane. In terms of biological role, part of the twin-arginine translocation (Tat) system that transports large folded proteins containing a characteristic twin-arginine motif in their signal peptide across membranes. TatA could form the protein-conducting channel of the Tat system. This Rhizobium meliloti (strain 1021) (Ensifer meliloti) protein is Sec-independent protein translocase protein TatA.